Consider the following 475-residue polypeptide: NADH-quinone oxidoreductase subunit N (475 aa).

Transmembrane regions (helical) follow at residues 7–27 (ISIA…VLLG), 40–60 (LLGA…SAVD), 74–94 (FIAI…LVAG), 105–125 (FEYT…LSAN), 127–147 (LMTL…LAAF), 161–181 (YFVL…LVYG), 191–211 (IAAA…LMAL), 242–262 (APKL…FGVY), 266–286 (WMLI…FGGL), 295–315 (LAYS…AGEV), 321–341 (VLTY…IVLA), 365–385 (LAVA…MAGF), 399–419 (ELYW…GYYL), and 448–468 (GATI…TGII).

It belongs to the complex I subunit 2 family. In terms of assembly, NDH-1 is composed of 14 different subunits. Subunits NuoA, H, J, K, L, M, N constitute the membrane sector of the complex.

The protein localises to the cell inner membrane. It carries out the reaction a quinone + NADH + 5 H(+)(in) = a quinol + NAD(+) + 4 H(+)(out). In terms of biological role, NDH-1 shuttles electrons from NADH, via FMN and iron-sulfur (Fe-S) centers, to quinones in the respiratory chain. The immediate electron acceptor for the enzyme in this species is believed to be ubiquinone. Couples the redox reaction to proton translocation (for every two electrons transferred, four hydrogen ions are translocated across the cytoplasmic membrane), and thus conserves the redox energy in a proton gradient. This Hirschia baltica (strain ATCC 49814 / DSM 5838 / IFAM 1418) protein is NADH-quinone oxidoreductase subunit N.